Consider the following 337-residue polypeptide: Ribosomal RNA small subunit methyltransferase H (337 aa).

Residues 36 to 38, aspartate 56, phenylalanine 82, aspartate 100, and glutamine 107 each bind S-adenosyl-L-methionine; that span reads GGH. The tract at residues 314 to 337 is disordered; that stretch reads GLERRSGRIPNPRSPIPASQGDAR.

It belongs to the methyltransferase superfamily. RsmH family.

Its subcellular location is the cytoplasm. The catalysed reaction is cytidine(1402) in 16S rRNA + S-adenosyl-L-methionine = N(4)-methylcytidine(1402) in 16S rRNA + S-adenosyl-L-homocysteine + H(+). Its function is as follows. Specifically methylates the N4 position of cytidine in position 1402 (C1402) of 16S rRNA. In Xanthomonas oryzae pv. oryzae (strain PXO99A), this protein is Ribosomal RNA small subunit methyltransferase H.